The chain runs to 407 residues: 1-deoxy-D-xylulose 5-phosphate reductoisomerase (407 aa).

NADPH contacts are provided by T25, G26, S27, I28, N53, and N136. K137 lines the 1-deoxy-D-xylulose 5-phosphate pocket. E138 serves as a coordination point for NADPH. Residue D162 coordinates Mn(2+). Residues S163, E164, S188, and H211 each coordinate 1-deoxy-D-xylulose 5-phosphate. E164 is a binding site for Mn(2+). An NADPH-binding site is contributed by G217. Residues S224, N229, K230, and E233 each coordinate 1-deoxy-D-xylulose 5-phosphate. E233 is a Mn(2+) binding site.

The protein belongs to the DXR family. Mg(2+) serves as cofactor. It depends on Mn(2+) as a cofactor.

The catalysed reaction is 2-C-methyl-D-erythritol 4-phosphate + NADP(+) = 1-deoxy-D-xylulose 5-phosphate + NADPH + H(+). Its pathway is isoprenoid biosynthesis; isopentenyl diphosphate biosynthesis via DXP pathway; isopentenyl diphosphate from 1-deoxy-D-xylulose 5-phosphate: step 1/6. In terms of biological role, catalyzes the NADPH-dependent rearrangement and reduction of 1-deoxy-D-xylulose-5-phosphate (DXP) to 2-C-methyl-D-erythritol 4-phosphate (MEP). This chain is 1-deoxy-D-xylulose 5-phosphate reductoisomerase, found in Rhodopseudomonas palustris (strain BisA53).